Reading from the N-terminus, the 161-residue chain is Globin CTT-VIIB-10 (161 aa).

The N-terminal stretch at 1–16 (MKFFAVLALCIVGAIA) is a signal peptide. A Globin domain is found at 18 to 161 (PLTADEASLV…NTFAIVVPRL (144 aa)). Residues His-76 and His-111 each coordinate heme b.

Belongs to the globin family. As to quaternary structure, homodimer.

This chain is Globin CTT-VIIB-10 (CTT-7B10), found in Chironomus thummi thummi (Midge).